The chain runs to 445 residues: Exodeoxyribonuclease 7 large subunit (445 aa).

Belongs to the XseA family. In terms of assembly, heterooligomer composed of large and small subunits.

The protein localises to the cytoplasm. The catalysed reaction is Exonucleolytic cleavage in either 5'- to 3'- or 3'- to 5'-direction to yield nucleoside 5'-phosphates.. Its function is as follows. Bidirectionally degrades single-stranded DNA into large acid-insoluble oligonucleotides, which are then degraded further into small acid-soluble oligonucleotides. This Staphylococcus saprophyticus subsp. saprophyticus (strain ATCC 15305 / DSM 20229 / NCIMB 8711 / NCTC 7292 / S-41) protein is Exodeoxyribonuclease 7 large subunit.